Consider the following 142-residue polypeptide: Large ribosomal subunit protein uL13 (142 aa).

Belongs to the universal ribosomal protein uL13 family. In terms of assembly, part of the 50S ribosomal subunit.

In terms of biological role, this protein is one of the early assembly proteins of the 50S ribosomal subunit, although it is not seen to bind rRNA by itself. It is important during the early stages of 50S assembly. The protein is Large ribosomal subunit protein uL13 of Vibrio atlanticus (strain LGP32) (Vibrio splendidus (strain Mel32)).